A 545-amino-acid chain; its full sequence is Membrane protein insertase YidC (545 aa).

The next 6 helical transmembrane spans lie at 10–30 (AVYLSLFFIGIFMLLDDFLFS), 319–339 (LLYFLQVPMQLIMQIFYNVIP), 341–361 (WGLSIMFLTIVVRILIFPLTF), 407–427 (IGGCFPILLQLPVFFALYGLV), 467–487 (ILPFIMMITQLLSTIVSSNVS), and 502–522 (MPIMFFFILYDMPSGLLIYWI).

The protein belongs to the OXA1/ALB3/YidC family. Type 1 subfamily. As to quaternary structure, interacts with the Sec translocase complex via SecD. Specifically interacts with transmembrane segments of nascent integral membrane proteins during membrane integration.

Its subcellular location is the cell inner membrane. Functionally, required for the insertion and/or proper folding and/or complex formation of integral membrane proteins into the membrane. Involved in integration of membrane proteins that insert both dependently and independently of the Sec translocase complex, as well as at least some lipoproteins. Aids folding of multispanning membrane proteins. This Borrelia duttonii (strain Ly) protein is Membrane protein insertase YidC.